A 323-amino-acid polypeptide reads, in one-letter code: Zinc finger C2HC domain-containing protein 1A (323 aa).

A C2HC/C3H-type 1 zinc finger spans residues 14 to 43 (ELLPCKICGRTFFPVALKKHGPICQKTATK). Cys-18, Cys-21, His-33, and Cys-37 together coordinate Zn(2+). The interval 42–81 (TKKRKTFDSSRQRAEGTDIPTVKPLKPRPEPPKKPSNWRR) is disordered. Positions 47–57 (TFDSSRQRAEG) are enriched in basic and acidic residues. The C2HC/C3H-type 2 zinc finger occupies 117-146 (DYIQCPYCQRRFNENAADRHINFCKEQAAR). Zn(2+) is bound by residues Cys-121, Cys-124, His-136, and Cys-140. Positions 149-258 (NKGKFSTDTK…NPASGVLTSK (110 aa)) are disordered. The span at 177–197 (SPGTTSSGSSRLPQPSGTSKT) shows a compositional bias: polar residues. Positions 198 to 214 (VVGAPSGKVSSVSSSSG) are enriched in low complexity. Ser-221 is subject to Phosphoserine. Thr-242 bears the Phosphothreonine mark. A Phosphoserine modification is found at Ser-290.

This sequence belongs to the ZC2HC1 family. The cofactor is Zn(2+).

The protein is Zinc finger C2HC domain-containing protein 1A (ZC2HC1A) of Bos taurus (Bovine).